We begin with the raw amino-acid sequence, 106 residues long: Large ribosomal subunit protein uL24 (106 aa).

This sequence belongs to the universal ribosomal protein uL24 family. Part of the 50S ribosomal subunit.

In terms of biological role, one of two assembly initiator proteins, it binds directly to the 5'-end of the 23S rRNA, where it nucleates assembly of the 50S subunit. Functionally, one of the proteins that surrounds the polypeptide exit tunnel on the outside of the subunit. The polypeptide is Large ribosomal subunit protein uL24 (Desulforudis audaxviator (strain MP104C)).